The sequence spans 146 residues: Ribonuclease H (146 aa).

The RNase H type-1 domain maps to 4–145 (ELNKVVVYTD…ADMLARSQIV (142 aa)). Mg(2+) contacts are provided by aspartate 13, glutamate 51, aspartate 73, and aspartate 137.

The protein belongs to the RNase H family. As to quaternary structure, monomer. Requires Mg(2+) as cofactor.

It is found in the cytoplasm. It catalyses the reaction Endonucleolytic cleavage to 5'-phosphomonoester.. Functionally, endonuclease that specifically degrades the RNA of RNA-DNA hybrids. The polypeptide is Ribonuclease H (Ehrlichia ruminantium (strain Gardel)).